The chain runs to 557 residues: Urocanate hydratase (557 aa).

Positions 1–20 (MSNPRHNEREVRSPRGDELN) are disordered. Residues 52 to 53 (GG), Gln-130, 176 to 178 (GMG), Glu-196, Arg-201, 242 to 243 (NA), 263 to 267 (QTSAH), 273 to 274 (YL), and Tyr-322 contribute to the NAD(+) site. The active site involves Cys-410. An NAD(+)-binding site is contributed by Gly-492.

The protein belongs to the urocanase family. The cofactor is NAD(+).

The protein resides in the cytoplasm. The enzyme catalyses 4-imidazolone-5-propanoate = trans-urocanate + H2O. It participates in amino-acid degradation; L-histidine degradation into L-glutamate; N-formimidoyl-L-glutamate from L-histidine: step 2/3. Catalyzes the conversion of urocanate to 4-imidazolone-5-propionate. The sequence is that of Urocanate hydratase from Brucella anthropi (strain ATCC 49188 / DSM 6882 / CCUG 24695 / JCM 21032 / LMG 3331 / NBRC 15819 / NCTC 12168 / Alc 37) (Ochrobactrum anthropi).